Here is a 967-residue protein sequence, read N- to C-terminus: Translation initiation factor IF-2 (967 aa).

A disordered region spans residues 34-363 (ASSTVEPPVA…APAVGGVSVP (330 aa)). Composition is skewed to low complexity over residues 51 to 96 (PAGG…GNAA) and 103 to 154 (ASEA…TPGP). Over residues 184-196 (RSEGGAQRGGPRP) the composition is skewed to gly residues. Residues 197–206 (GGQQRSGKPG) are compositionally biased toward low complexity. The span at 300–333 (PRRGGGPGGGPGGGGGFRGRGGRGGTQGAFGRGG) shows a compositional bias: gly residues. Basic residues predominate over residues 334–345 (ARGKHRKSKRAK). One can recognise a tr-type G domain in the interval 460–632 (PRPPVVTVMG…IVLTADGALE (173 aa)). Positions 469–476 (GHVDHGKT) are G1. A GTP-binding site is contributed by 469-476 (GHVDHGKT). Residues 494 to 498 (GITQH) form a G2 region. The tract at residues 519-522 (DTPG) is G3. GTP is bound by residues 519–523 (DTPGH) and 573–576 (NKVD). A G4 region spans residues 573–576 (NKVD). A G5 region spans residues 609 to 611 (SAR).

The protein belongs to the TRAFAC class translation factor GTPase superfamily. Classic translation factor GTPase family. IF-2 subfamily.

It is found in the cytoplasm. One of the essential components for the initiation of protein synthesis. Protects formylmethionyl-tRNA from spontaneous hydrolysis and promotes its binding to the 30S ribosomal subunits. Also involved in the hydrolysis of GTP during the formation of the 70S ribosomal complex. This chain is Translation initiation factor IF-2, found in Kocuria rhizophila (strain ATCC 9341 / DSM 348 / NBRC 103217 / DC2201).